Here is a 783-residue protein sequence, read N- to C-terminus: Ubiquitin carboxyl-terminal hydrolase 1 (783 aa).

Disordered stretches follow at residues 1 to 22 and 34 to 55; these read MPGVIPSESNGLSRGSPSKKNR and KRALDFTDSQENEEKTSEYKGS. The segment covering 7 to 16 has biased composition (polar residues); that stretch reads SESNGLSRGS. A phosphoserine mark is found at Ser-16 and Ser-42. A compositionally biased stretch (basic and acidic residues) spans 45–55; the sequence is NEEKTSEYKGS. Ser-67 is modified (phosphoserine). The region spanning 81–783 is the USP domain; sequence VGLNNLGNTC…TPYLLFYKKL (703 aa). Catalysis depends on Cys-90, which acts as the Nucleophile. The interval 234 to 311 is disordered; sequence EEYQKEEMSD…RKAAGDTLEI (78 aa). Basic and acidic residues-rich tracts occupy residues 250 to 273 and 284 to 296; these read DNMRHSEDYKEKLSKGNGKRKSDA and ISKEHQSSEENQR. The residue at position 473 (Ser-473) is a Phosphoserine. Residue His-591 is the Proton acceptor of the active site. A disordered region spans residues 685–722; the sequence is PDKVASTALPENRNSETNNTNGTDESDSNKESSDQTGI. Ser-766 is subject to Phosphoserine.

The protein belongs to the peptidase C19 family. As to quaternary structure, interacts with FANCD2 and PCNA. Interacts with WDR48. Interacts with ATAD5; the interaction regulates USP1-mediated PCNA deubiquitination. Post-translationally, autocatalytic cleavage of USP1 following UV irradiation inactivates it, leading to an increase in ubiquitinated PCNA, recruitment of POLH and translesion synthesis. In terms of processing, ubiquitinated by the CRL2(KLHDC2) complex following autocatalytic cleavage, leading to its degradation: the CRL2(KLHDC2) complex recognizes the diglycine (Gly-Gly) at the C-terminus.

The protein resides in the nucleus. It catalyses the reaction Thiol-dependent hydrolysis of ester, thioester, amide, peptide and isopeptide bonds formed by the C-terminal Gly of ubiquitin (a 76-residue protein attached to proteins as an intracellular targeting signal).. Negative regulator of DNA damage repair which specifically deubiquitinates monoubiquitinated FANCD2. Also involved in PCNA-mediated translesion synthesis (TLS) by deubiquitinating monoubiquitinated PCNA. Has almost no deubiquitinating activity by itself and requires the interaction with WDR48 to have a high activity. The chain is Ubiquitin carboxyl-terminal hydrolase 1 from Bos taurus (Bovine).